A 413-amino-acid chain; its full sequence is MAAFQKIKVANPIVEMDGDEMTRVIWKSIKDKLILPFLELDIKYYDLGLPYRDETDDKVTIESAEATLKYNVAIKCATITPDEARVKEFGLKSMWKSPNGTIRNILNGTVFREPILCKNIPRLVPGWTKAICIGRHAFGDQYRATDTVIKGAGKLKLVFVPEGQGEETEFEVFNFTGEGGVSLAMYNTDESIRSFAEASMATALEKKWPLYLSTKNTILKKYDGRFKDIFQEVYEASWKSKFEAAGIWYEHRLIDDMVAYALKSEGGYVWACKNYDGDVQSDFLAQGFGSLGLMTSVLVCPDGKTIEAEAAHGTVTRHFRVHQKGGETSTNSIASIFAWTRGLAHRAKLDDNAKLLDFTEKLEAACIGVVEAGKMTKDLALILHGSKLSREHYLNTEEFIDAVAAELSARLSA.

NADP(+) contacts are provided by residues 78–80 (TIT) and Arg-85. Residue Thr-80 participates in substrate binding. Substrate-binding positions include 97–103 (SPNGTIR), Arg-112, Arg-135, and Lys-215. Asp-255 lines the Mn(2+) pocket. Position 263 (Lys-263) interacts with NADP(+). Residues Asp-278 and Asp-282 each coordinate Mn(2+). NADP(+) is bound by residues 313 to 318 (GTVTRH) and Asn-331.

This sequence belongs to the isocitrate and isopropylmalate dehydrogenases family. In terms of assembly, heterodimer. Mg(2+) is required as a cofactor. The cofactor is Mn(2+). In terms of tissue distribution, leaves, nodules and roots with the relative amount of 1:3.4:7.7.

Its subcellular location is the cytoplasm. It catalyses the reaction D-threo-isocitrate + NADP(+) = 2-oxoglutarate + CO2 + NADPH. May supply 2-oxoglutarate for amino acid biosynthesis and ammonia assimilation via the glutamine synthetase/glutamate synthase (GS/GOGAT) pathway. The protein is Isocitrate dehydrogenase [NADP] (IDH1) of Glycine max (Soybean).